We begin with the raw amino-acid sequence, 227 residues long: Uracil-DNA glycosylase (227 aa).

Aspartate 65 (proton acceptor) is an active-site residue.

This sequence belongs to the uracil-DNA glycosylase (UDG) superfamily. UNG family.

The protein resides in the cytoplasm. The catalysed reaction is Hydrolyzes single-stranded DNA or mismatched double-stranded DNA and polynucleotides, releasing free uracil.. Its function is as follows. Excises uracil residues from the DNA which can arise as a result of misincorporation of dUMP residues by DNA polymerase or due to deamination of cytosine. The protein is Uracil-DNA glycosylase of Buchnera aphidicola subsp. Cinara cedri (strain Cc).